The sequence spans 374 residues: Succinyl-diaminopimelate desuccinylase (374 aa).

H66 contacts Zn(2+). Residue D68 is part of the active site. Residue D99 coordinates Zn(2+). Catalysis depends on E133, which acts as the Proton acceptor. Residues E134, E162, and H348 each contribute to the Zn(2+) site.

The protein belongs to the peptidase M20A family. DapE subfamily. Homodimer. Zn(2+) serves as cofactor. It depends on Co(2+) as a cofactor.

The enzyme catalyses N-succinyl-(2S,6S)-2,6-diaminopimelate + H2O = (2S,6S)-2,6-diaminopimelate + succinate. The protein operates within amino-acid biosynthesis; L-lysine biosynthesis via DAP pathway; LL-2,6-diaminopimelate from (S)-tetrahydrodipicolinate (succinylase route): step 3/3. In terms of biological role, catalyzes the hydrolysis of N-succinyl-L,L-diaminopimelic acid (SDAP), forming succinate and LL-2,6-diaminopimelate (DAP), an intermediate involved in the bacterial biosynthesis of lysine and meso-diaminopimelic acid, an essential component of bacterial cell walls. This is Succinyl-diaminopimelate desuccinylase from Coxiella burnetii (strain RSA 331 / Henzerling II).